Here is a 492-residue protein sequence, read N- to C-terminus: Ammonium transporter MEP1 (492 aa).

The Extracellular segment spans residues 1-18; that stretch reads MESRTTGPLTTETYDGPT. The chain crosses the membrane as a helical span at residues 19–39; the sequence is VAFMILGAALVFFMVPGLGFL. At 40-49 the chain is on the cytoplasmic side; that stretch reads YSGLARRKSA. The helical transmembrane segment at 50-70 threads the bilayer; the sequence is LALIWVVLMATLVGILQWYFW. Residues 71-109 lie on the Extracellular side of the membrane; that stretch reads GYSLAFSKSAPNNKFIGNLDSFGFRNVYGKKFDEDAYPE. Residues 110-130 traverse the membrane as a helical segment; the sequence is LAYATFQMMFSCVNLSIIAGA. Residues 131 to 140 are Cytoplasmic-facing; that stretch reads TAERGRLLPH. Residues 141–161 form a helical membrane-spanning segment; sequence MVFLFILATIGYCPVTYWIWS. The Extracellular segment spans residues 162-174; sequence PGGWAYQWGVLDW. Residues 175–195 form a helical membrane-spanning segment; that stretch reads AGGGNIEILSAVSGFVYSWFL. Topologically, residues 196–210 are cytoplasmic; sequence GKRNEKLLINFRPHN. The chain crosses the membrane as a helical span at residues 211 to 231; that stretch reads VSLVTLGTSILWFGWLLFNSA. The Extracellular segment spans residues 232-240; that stretch reads SSLSPNLRS. The helical transmembrane segment at 241-261 threads the bilayer; the sequence is VYAFMNTCLSAITGGMTWCLL. Residues 262-268 lie on the Cytoplasmic side of the membrane; the sequence is DYRSEKK. The helical transmembrane segment at 269-289 threads the bilayer; that stretch reads WSTVGLCSGIISGLVAATPSS. Residue Gly290 is a topological domain, extracellular. The helical transmembrane segment at 291–311 threads the bilayer; sequence CITLYGSLIQGIVAGVVCNFA. Topologically, residues 312–331 are cytoplasmic; sequence TKLKYYAKVDDAMDILAEHG. The helical transmembrane segment at 332-352 threads the bilayer; that stretch reads VAGVIGLIFNALFGADWVIGM. Residues 353-373 lie on the Extracellular side of the membrane; that stretch reads DGTTEHEGGWVTHNYKQMYKQ. A helical transmembrane segment spans residues 374–394; it reads IAYIAASIGYTAAVTAIICFV. At 395–492 the chain is on the cytoplasmic side; sequence LGYIPGMRLR…PIHQEDPANR (98 aa). Residues Ser442 and Ser445 each carry the phosphoserine modification. A disordered region spans residues 455–492; sequence HLAAERSSSGTNSSSDGNGEMIQSEKILPIHQEDPANR. A compositionally biased stretch (low complexity) spans 461–473; the sequence is SSSGTNSSSDGNG.

Belongs to the ammonia transporter channel (TC 1.A.11.2) family.

The protein localises to the membrane. Functionally, transporter for ammonium (both charged and uncharged NH3 and NH4) to use as a nitrogen source. Can also transport methylamine. The affinity of MEP1 is about twenty times lower than that of MEP2. MEP3 has the lowest affinity. In Saccharomyces cerevisiae (strain ATCC 204508 / S288c) (Baker's yeast), this protein is Ammonium transporter MEP1 (MEP1).